Reading from the N-terminus, the 874-residue chain is Alanine--tRNA ligase (874 aa).

The Zn(2+) site is built by histidine 562, histidine 566, cysteine 665, and histidine 669.

Belongs to the class-II aminoacyl-tRNA synthetase family. Zn(2+) is required as a cofactor.

Its subcellular location is the cytoplasm. It carries out the reaction tRNA(Ala) + L-alanine + ATP = L-alanyl-tRNA(Ala) + AMP + diphosphate. In terms of biological role, catalyzes the attachment of alanine to tRNA(Ala) in a two-step reaction: alanine is first activated by ATP to form Ala-AMP and then transferred to the acceptor end of tRNA(Ala). Also edits incorrectly charged Ser-tRNA(Ala) and Gly-tRNA(Ala) via its editing domain. The protein is Alanine--tRNA ligase of Pseudomonas entomophila (strain L48).